Here is a 118-residue protein sequence, read N- to C-terminus: Large ribosomal subunit protein bL20 (118 aa).

It belongs to the bacterial ribosomal protein bL20 family.

Binds directly to 23S ribosomal RNA and is necessary for the in vitro assembly process of the 50S ribosomal subunit. It is not involved in the protein synthesizing functions of that subunit. The chain is Large ribosomal subunit protein bL20 from Lactobacillus acidophilus (strain ATCC 700396 / NCK56 / N2 / NCFM).